Reading from the N-terminus, the 471-residue chain is MDLVIGGKFKLGRKIGSGSFGELYLGINVQTGEEVAVKLESVKTKHPQLHYESKLYMLLQGGTGVPNLKWYGVEGDYNVMVIDLLGPSLEDLFNYCNRKLSLKTVLMLADQLINRVEFMHTRGFLHRDIKPDNFLMGLGRKANQVYIIDFGLGKKYRDLQTHRHIPYRENKNLTGTARYASVNTHLGVEQSRRDDLEALGYVLMYFLKGSLPWQGLKAGTKKQKYDRISEKKVATPIEVLCKNQPSEFVSYFRYCRSLRFDDKPDYSYLKRLFRDLFIREGYQFDYVFDWTVLKYPQIGSSSGSSSRTRNHTTANPGLTAGASLEKQERIAGKETRENRFSGAVEAFSRRHPATSTTRDRSASRNSVDGPLSKHPPGDSERPRSSSRYGSSSRRAIPSSSRPSSAGGPSDSRSSSRLVTSTGGVGTVSNRASTSQRIQAGNESRTSSFSRAARNTREDPLRRSLELLTLRK.

Residues 9–278 (FKLGRKIGSG…LKRLFRDLFI (270 aa)) enclose the Protein kinase domain. Residues 15–23 (IGSGSFGEL) and Lys38 each bind ATP. Asp128 (proton acceptor) is an active-site residue. A disordered region spans residues 300 to 471 (SSSGSSSRTR…RSLELLTLRK (172 aa)). Residues 325–339 (EKQERIAGKETRENR) show a composition bias toward basic and acidic residues. Residues 385-430 (SSRYGSSSRRAIPSSSRPSSAGGPSDSRSSSRLVTSTGGVGTVSNR) show a composition bias toward low complexity. Residues 431-449 (ASTSQRIQAGNESRTSSFS) are compositionally biased toward polar residues. Residues 454–464 (NTREDPLRRSL) show a composition bias toward basic and acidic residues.

The protein belongs to the protein kinase superfamily. CK1 Ser/Thr protein kinase family. Casein kinase I subfamily. As to quaternary structure, monomer. In terms of processing, autophosphorylated on serine, threonine and tyrosine residues. Expressed in leaves, stems and flowers.

The protein localises to the cytoplasm. Its subcellular location is the nucleus. It catalyses the reaction L-seryl-[protein] + ATP = O-phospho-L-seryl-[protein] + ADP + H(+). The enzyme catalyses L-threonyl-[protein] + ATP = O-phospho-L-threonyl-[protein] + ADP + H(+). In terms of biological role, casein kinases are operationally defined by their preferential utilization of acidic proteins such as caseins as substrates. Can phosphorylate casein on serine and threonine residues, and poly(Glu,Tyr) in vitro. This is Casein kinase 1-like protein 9 from Arabidopsis thaliana (Mouse-ear cress).